A 299-amino-acid chain; its full sequence is MSNDIDLIKRLDPSAMDQIMLYLAFSAMRTSGHRHGAFLDAAATAAKCAIYMTYLEQGQNLRMTGHLHHLEPKRVKIIVEEVRQALTEGKLLKMLGSQEPRYLIQLPYVWLEKYPWQPGRSRVPGTSLTSEEKRQIEQKLPSNLPDAQLVSSFEFLDLIEFLHRRSQEDLPTEHQMPLSEALGEHIKRRLLYSGTVTRIDSPWGMPFYALTRPFYAPADDQERTYIMVEDTARYFRMMKNWAERRRNAMRLLEELDILPEKMEQAMEELDEIIRAWADKYHQDGGIAVVLQTVFGEKED.

Serine 152 is an active-site residue.

This sequence belongs to the peptidase S48 family. Homodimer; disulfide-linked.

Functionally, controls heterocyst differentiation. Dimerization is required for DNA-binding. Has both a protease and a DNA-binding activity. Increased expression leads to more heterocysts than usual. The sequence is that of DNA-binding transcriptional activator HetR from Nostoc punctiforme (strain ATCC 29133 / PCC 73102).